Here is a 112-residue protein sequence, read N- to C-terminus: Thyroid transcription factor 1 (112 aa).

The segment at residues 1-60 (RRNRRVLFSQAQVYELERRFKQQKYLSAPEREHLASMIHLTPTQVKIWFQNHRYKMKRQA) is a DNA-binding region (homeobox). The interval 59–100 (QAKDKAAQQQLQQDSGGGGGGGGAGCPQQQQAQQQSPRRVAV) is disordered. A compositionally biased stretch (gly residues) spans 73–83 (SGGGGGGGGAG). The segment covering 84–93 (CPQQQQAQQQ) has biased composition (low complexity).

The protein belongs to the NK-2 homeobox family. In terms of processing, phosphorylated on serine residues.

The protein localises to the nucleus. Transcription factor that binds and activates the promoter of thyroid specific genes such as thyroglobulin, thyroperoxidase, and thyrotropin receptor. Crucial in the maintenance of the thyroid differentiation phenotype. May play a role in lung development and surfactant homeostasis. In Cavia porcellus (Guinea pig), this protein is Thyroid transcription factor 1 (TITF1).